The following is a 375-amino-acid chain: Neuropeptide Y receptor type 4 (375 aa).

Over 1–39 (MNTSHFLAPLFPGSLQGKNGTNPLDSPYNFSDGCQDSAE) the chain is Extracellular. 3 N-linked (GlcNAc...) asparagine glycosylation sites follow: N2, N19, and N29. Residues 40-60 (LLAFIITTYSIETILGVLGNL) traverse the membrane as a helical segment. Over 61-78 (CLIFVTTRQKEKSNVTNL) the chain is Cytoplasmic. Residues 79–99 (LIANLAFSDFLMCLICQPLTV) form a helical membrane-spanning segment. The Extracellular portion of the chain corresponds to 100-116 (TYTIMDYWIFGEVLCKM). C114 and C201 are joined by a disulfide. The helical transmembrane segment at 117–137 (LTFIQCMSVTVSILSLVLVAL) threads the bilayer. Topologically, residues 138 to 155 (ERHQLIINPTGWKPSIFQ) are cytoplasmic. A helical transmembrane segment spans residues 156–176 (AYLGIVVIWFVSCFLSLPFLA). Topologically, residues 177–211 (NSTLNDLFHYNHSKVVEFLEDKVVCFVSWSSDHHR) are extracellular. The N-linked (GlcNAc...) asparagine glycan is linked to N187. The helical transmembrane segment at 212–232 (LIYTTFLLLFQYCIPLAFILV) threads the bilayer. Over 233–266 (CYIRIYQRLQRQKHVFHAHACSSRAGQMKRINSM) the chain is Cytoplasmic. The helical transmembrane segment at 267–287 (LMTMVTAFAVLWLPLHVFNTL) threads the bilayer. Topologically, residues 288-301 (EDWYQEAIPACHGN) are extracellular. A helical transmembrane segment spans residues 302–322 (LIFLMCHLLAMASTCVNPFIY). The Cytoplasmic segment spans residues 323–375 (GFLNINFKKDIKALVLTCHCRSPRGESEHLPLSTVHTDLSKGSMRMGSKSNFI). C340 carries S-palmitoyl cysteine lipidation.

Belongs to the G-protein coupled receptor 1 family. In terms of tissue distribution, heart, detected in small intestine.

The protein resides in the cell membrane. G protein-coupled receptor for PPY/pancreatic polypeptide/PP that is negatively coupled to cAMP. Has much lower affinity for the NPY/neuropeptide Y and PYY/peptide YY. This chain is Neuropeptide Y receptor type 4 (Npy4r), found in Mus musculus (Mouse).